Reading from the N-terminus, the 453-residue chain is Na(+)/H(+) antiporter NhaA 2 (453 aa).

The next 12 membrane-spanning stretches (helical) occupy residues 23-43 (FLHIEAVSGIVLLIAAVAALI), 74-94 (LHFWINDGLMTIFFLVVGMEI), 111-131 (LPMAAAVGGVAVPALLYLSFG), 139-159 (GWAVPTATDIAFAVGVLALLG), 168-188 (VFLLALAIIDDIIAVLIIAFF), 191-211 (GGLDYTGFGVALIGLLMVIGL), 214-234 (IGVGSAYAYVLPGAIVWLGIL), 235-255 (LTGAHPTLAGVVLGLMTPVTA), 316-336 (VAFGIMPVFALANAGVSLSGV), 345-365 (WVMIAVAVALVAGKPLGIVSV), 386-406 (IVLVGLLAGIGFTMSIFIANL), and 419-439 (LGVLSASLIAAVLGLTWGVWS).

It belongs to the NhaA Na(+)/H(+) (TC 2.A.33) antiporter family.

The protein localises to the cell inner membrane. It catalyses the reaction Na(+)(in) + 2 H(+)(out) = Na(+)(out) + 2 H(+)(in). Na(+)/H(+) antiporter that extrudes sodium in exchange for external protons. This is Na(+)/H(+) antiporter NhaA 2 from Pseudomonas putida (strain ATCC 700007 / DSM 6899 / JCM 31910 / BCRC 17059 / LMG 24140 / F1).